The sequence spans 215 residues: Vesicle-trafficking protein SEC22b (215 aa).

The Cytoplasmic portion of the chain corresponds to 2 to 194; that stretch reads VLLTMIARVA…KYLNMRSTYA (193 aa). Residues 6-119 enclose the Longin domain; sequence MIARVADGLP…YSFIEFDTFI (114 aa). The residue at position 38 (K38) is an N6-acetyllysine. Positions 134-194 constitute a v-SNARE coiled-coil homology domain; it reads NLGSINTELQ…KYLNMRSTYA (61 aa). At S137 the chain carries Phosphoserine. T140 is modified (phosphothreonine). A phosphoserine mark is found at S164, S168, S174, and S177. The helical; Anchor for type IV membrane protein transmembrane segment at 195–215 threads the bilayer; the sequence is KLAAVAVFFIMLIVYVRFWWL.

Belongs to the synaptobrevin family. As to quaternary structure, interacts with STX17. Component of two distinct SNARE complexes consisting of STX5, GOSR2/BOS1, BET1 and SEC22B or STX18, USE1L, BNIP1/SEC20L and SEC22B. YKT6 can probably replace SEC22B in either complex. Interacts with the COPII Sec23/24 complex composed of SEC23A and SEC24A; recruits SEC22B into COPII-coated vesicles to allow its transport from the endoplasmic reticulum to the Golgi. Interacts with BET1.

The protein localises to the endoplasmic reticulum membrane. It localises to the endoplasmic reticulum-Golgi intermediate compartment membrane. The protein resides in the golgi apparatus. It is found in the cis-Golgi network membrane. Its subcellular location is the trans-Golgi network membrane. The protein localises to the melanosome. Functionally, SNARE involved in targeting and fusion of ER-derived transport vesicles with the Golgi complex as well as Golgi-derived retrograde transport vesicles with the ER. This is Vesicle-trafficking protein SEC22b (SEC22B) from Homo sapiens (Human).